We begin with the raw amino-acid sequence, 73 residues long: MPPSFFKKRLSPIKPGDPIDYKDTDLLKKFITERGKLLPRRMTGLTARQQRDLTNSVKRARIVALLPFVNPEG.

This sequence belongs to the bacterial ribosomal protein bS18 family. Part of the 30S ribosomal subunit. Forms a tight heterodimer with protein bS6.

Binds as a heterodimer with protein bS6 to the central domain of the 16S rRNA, where it helps stabilize the platform of the 30S subunit. The polypeptide is Small ribosomal subunit protein bS18 (Synechococcus sp. (strain RCC307)).